The sequence spans 101 residues: MAKKSKIVAQKKREKLVAQYAERRAELKAIMKCPTASLDERMEASRKLSRLPRDSSPVRLRNRDQVDGRPRGYVGKAGVSRARFREMAHRGELPGITKSSW.

The interval 44–74 (ASRKLSRLPRDSSPVRLRNRDQVDGRPRGYV) is disordered. The segment covering 61-70 (RNRDQVDGRP) has biased composition (basic and acidic residues).

It belongs to the universal ribosomal protein uS14 family. Part of the 30S ribosomal subunit. Contacts proteins S3 and S10.

Functionally, binds 16S rRNA, required for the assembly of 30S particles and may also be responsible for determining the conformation of the 16S rRNA at the A site. In Cutibacterium acnes (strain DSM 16379 / KPA171202) (Propionibacterium acnes), this protein is Small ribosomal subunit protein uS14.